Here is a 759-residue protein sequence, read N- to C-terminus: Glucosylceramidase (759 aa).

The active-site Proton donor is the glutamate 247. The active-site Nucleophile is glutamate 497. Residues 576-600 (AFENESQRDPQSPAYSESQRNTESY) are disordered. The span at 584–599 (DPQSPAYSESQRNTES) shows a compositional bias: polar residues.

Belongs to the glycosyl hydrolase 5 (cellulase A) family.

Its subcellular location is the membrane. The enzyme catalyses a beta-D-glucosyl-(1&lt;-&gt;1')-N-acylsphing-4-enine + H2O = an N-acylsphing-4-enine + D-glucose. Specifically hydrolyzes the glucosidic linkage in glucosylceramide. May prevent accumulation of aberrent glucosylceramide containing immature ceramide. This is Glucosylceramidase from Aspergillus fumigatus (Neosartorya fumigata).